The primary structure comprises 335 residues: Fructose-1,6-bisphosphatase class 1 (335 aa).

Glu-92, Asp-114, Leu-116, and Asp-117 together coordinate Mg(2+). Substrate contacts are provided by residues 117–120 (DGSS) and Asn-209. Residue Glu-281 coordinates Mg(2+).

This sequence belongs to the FBPase class 1 family. As to quaternary structure, homotetramer. The cofactor is Mg(2+).

It localises to the cytoplasm. It carries out the reaction beta-D-fructose 1,6-bisphosphate + H2O = beta-D-fructose 6-phosphate + phosphate. The protein operates within carbohydrate biosynthesis; gluconeogenesis. In Nitrosococcus oceani (strain ATCC 19707 / BCRC 17464 / JCM 30415 / NCIMB 11848 / C-107), this protein is Fructose-1,6-bisphosphatase class 1.